An 880-amino-acid chain; its full sequence is Alanine--tRNA ligase (880 aa).

Residues histidine 566, histidine 570, cysteine 668, and histidine 672 each contribute to the Zn(2+) site.

It belongs to the class-II aminoacyl-tRNA synthetase family. The cofactor is Zn(2+).

The protein resides in the cytoplasm. It catalyses the reaction tRNA(Ala) + L-alanine + ATP = L-alanyl-tRNA(Ala) + AMP + diphosphate. Catalyzes the attachment of alanine to tRNA(Ala) in a two-step reaction: alanine is first activated by ATP to form Ala-AMP and then transferred to the acceptor end of tRNA(Ala). Also edits incorrectly charged Ser-tRNA(Ala) and Gly-tRNA(Ala) via its editing domain. The sequence is that of Alanine--tRNA ligase from Trichormus variabilis (strain ATCC 29413 / PCC 7937) (Anabaena variabilis).